We begin with the raw amino-acid sequence, 485 residues long: Probable glycine dehydrogenase (decarboxylating) subunit 2 (485 aa).

K273 is modified (N6-(pyridoxal phosphate)lysine).

It belongs to the GcvP family. C-terminal subunit subfamily. The glycine cleavage system is composed of four proteins: P, T, L and H. In this organism, the P 'protein' is a heterodimer of two subunits. Requires pyridoxal 5'-phosphate as cofactor.

It carries out the reaction N(6)-[(R)-lipoyl]-L-lysyl-[glycine-cleavage complex H protein] + glycine + H(+) = N(6)-[(R)-S(8)-aminomethyldihydrolipoyl]-L-lysyl-[glycine-cleavage complex H protein] + CO2. Functionally, the glycine cleavage system catalyzes the degradation of glycine. The P protein binds the alpha-amino group of glycine through its pyridoxal phosphate cofactor; CO(2) is released and the remaining methylamine moiety is then transferred to the lipoamide cofactor of the H protein. This chain is Probable glycine dehydrogenase (decarboxylating) subunit 2, found in Caldanaerobacter subterraneus subsp. tengcongensis (strain DSM 15242 / JCM 11007 / NBRC 100824 / MB4) (Thermoanaerobacter tengcongensis).